A 198-amino-acid polypeptide reads, in one-letter code: MNELVVATKNKGKLADFQTLFTDRYIVKSLYDYPEVPEIIEDGDTFHENAAKKAETLAAYLQKLVIADDSGLLIDALGGKPGVYSARYAGEPKNDQANIDKVLSELDGVPTQKRTARFFCVIALAEPGKETIFAEGACEGRITEKPTGSNGFGYDPIFFVPSHGQTMAELSAGTKNQLSHRARALTALKETIEGVWPK.

Thr8–Lys13 is a substrate binding site. Asp69 serves as the catalytic Proton acceptor. Asp69 is a Mg(2+) binding site. Substrate contacts are provided by residues Ser70, Phe152–Asp155, Lys175, and His180–Arg181.

The protein belongs to the HAM1 NTPase family. Homodimer. Requires Mg(2+) as cofactor.

The catalysed reaction is XTP + H2O = XMP + diphosphate + H(+). It catalyses the reaction dITP + H2O = dIMP + diphosphate + H(+). It carries out the reaction ITP + H2O = IMP + diphosphate + H(+). Functionally, pyrophosphatase that catalyzes the hydrolysis of nucleoside triphosphates to their monophosphate derivatives, with a high preference for the non-canonical purine nucleotides XTP (xanthosine triphosphate), dITP (deoxyinosine triphosphate) and ITP. Seems to function as a house-cleaning enzyme that removes non-canonical purine nucleotides from the nucleotide pool, thus preventing their incorporation into DNA/RNA and avoiding chromosomal lesions. This is dITP/XTP pyrophosphatase from Shouchella clausii (strain KSM-K16) (Alkalihalobacillus clausii).